Reading from the N-terminus, the 55-residue chain is Large ribosomal subunit protein bL33 (55 aa).

It belongs to the bacterial ribosomal protein bL33 family.

The sequence is that of Large ribosomal subunit protein bL33 from Bartonella bacilliformis (strain ATCC 35685 / KC583 / Herrer 020/F12,63).